The chain runs to 347 residues: D-alanine--D-alanine ligase (347 aa).

The region spanning lysine 134–lysine 332 is the ATP-grasp domain. Leucine 161–tyrosine 216 provides a ligand contact to ATP. Residues aspartate 288, glutamate 300, and asparagine 302 each coordinate Mg(2+).

This sequence belongs to the D-alanine--D-alanine ligase family. Mg(2+) serves as cofactor. The cofactor is Mn(2+).

Its subcellular location is the cytoplasm. The catalysed reaction is 2 D-alanine + ATP = D-alanyl-D-alanine + ADP + phosphate + H(+). Its pathway is cell wall biogenesis; peptidoglycan biosynthesis. Its function is as follows. Cell wall formation. The chain is D-alanine--D-alanine ligase from Helicobacter pylori (strain J99 / ATCC 700824) (Campylobacter pylori J99).